Consider the following 312-residue polypeptide: Golgi to ER traffic protein 2 (312 aa).

Over 1–175 (MSDSPSISAE…VQYNTYRHQV (175 aa)) the chain is Cytoplasmic. The helical transmembrane segment at 176-196 (WKFRFLAVRYFALLANFIYHF) threads the bilayer. The Lumenal segment spans residues 197 to 224 (YIIGDSISFASSSHQFIRELIPVEPARS). Residues 225-244 (FFTLFSTIEVVIIASYYFLG) traverse the membrane as a helical segment. Residues 245–288 (TKEGFFSTATSNNFVVKLLDMGSMVLPQLQQFKTIAVRLLGYYE) lie on the Cytoplasmic side of the membrane. The helical transmembrane segment at 289 to 309 (LLAVLLGDLSLVVVLFGLHSV) threads the bilayer. Residues 310 to 312 (LGN) are Lumenal-facing.

This sequence belongs to the GET2 family. In terms of assembly, component of the Golgi to ER traffic (GET) complex, which is composed of GET1, GET2 and GET3. Within the complex, GET1 and GET2 form a heterotetramer which is stabilized by phosphatidylinositol binding and which binds to the GET3 homodimer.

Its subcellular location is the endoplasmic reticulum membrane. It is found in the golgi apparatus membrane. Its function is as follows. Required for the post-translational delivery of tail-anchored (TA) proteins to the endoplasmic reticulum. Together with GET1, acts as a membrane receptor for soluble GET3, which recognizes and selectively binds the transmembrane domain of TA proteins in the cytosol. The GET complex cooperates with the HDEL receptor ERD2 to mediate the ATP-dependent retrieval of resident ER proteins that contain a C-terminal H-D-E-L retention signal from the Golgi to the ER. The protein is Golgi to ER traffic protein 2 of Scheffersomyces stipitis (strain ATCC 58785 / CBS 6054 / NBRC 10063 / NRRL Y-11545) (Yeast).